The sequence spans 72 residues: Translation initiation factor IF-1 (72 aa).

Residues 1–72 (MAKEDSIEMQ…SKGRIVFRAR (72 aa)) enclose the S1-like domain.

Belongs to the IF-1 family. Component of the 30S ribosomal translation pre-initiation complex which assembles on the 30S ribosome in the order IF-2 and IF-3, IF-1 and N-formylmethionyl-tRNA(fMet); mRNA recruitment can occur at any time during PIC assembly.

Its subcellular location is the cytoplasm. Functionally, one of the essential components for the initiation of protein synthesis. Stabilizes the binding of IF-2 and IF-3 on the 30S subunit to which N-formylmethionyl-tRNA(fMet) subsequently binds. Helps modulate mRNA selection, yielding the 30S pre-initiation complex (PIC). Upon addition of the 50S ribosomal subunit IF-1, IF-2 and IF-3 are released leaving the mature 70S translation initiation complex. This is Translation initiation factor IF-1 from Psychromonas ingrahamii (strain DSM 17664 / CCUG 51855 / 37).